Consider the following 189-residue polypeptide: Probable nicotinate-nucleotide adenylyltransferase (189 aa).

Belongs to the NadD family.

The catalysed reaction is nicotinate beta-D-ribonucleotide + ATP + H(+) = deamido-NAD(+) + diphosphate. It functions in the pathway cofactor biosynthesis; NAD(+) biosynthesis; deamido-NAD(+) from nicotinate D-ribonucleotide: step 1/1. Its function is as follows. Catalyzes the reversible adenylation of nicotinate mononucleotide (NaMN) to nicotinic acid adenine dinucleotide (NaAD). This is Probable nicotinate-nucleotide adenylyltransferase from Bacillus mycoides (strain KBAB4) (Bacillus weihenstephanensis).